The primary structure comprises 307 residues: Methionyl-tRNA formyltransferase (307 aa).

Ser110–Pro113 contacts (6S)-5,6,7,8-tetrahydrofolate.

This sequence belongs to the Fmt family.

The catalysed reaction is L-methionyl-tRNA(fMet) + (6R)-10-formyltetrahydrofolate = N-formyl-L-methionyl-tRNA(fMet) + (6S)-5,6,7,8-tetrahydrofolate + H(+). Functionally, attaches a formyl group to the free amino group of methionyl-tRNA(fMet). The formyl group appears to play a dual role in the initiator identity of N-formylmethionyl-tRNA by promoting its recognition by IF2 and preventing the misappropriation of this tRNA by the elongation apparatus. This Chromobacterium violaceum (strain ATCC 12472 / DSM 30191 / JCM 1249 / CCUG 213 / NBRC 12614 / NCIMB 9131 / NCTC 9757 / MK) protein is Methionyl-tRNA formyltransferase.